The chain runs to 78 residues: Small ribosomal subunit protein bS18 (78 aa).

This sequence belongs to the bacterial ribosomal protein bS18 family. In terms of assembly, part of the 30S ribosomal subunit. Forms a tight heterodimer with protein bS6.

In terms of biological role, binds as a heterodimer with protein bS6 to the central domain of the 16S rRNA, where it helps stabilize the platform of the 30S subunit. The polypeptide is Small ribosomal subunit protein bS18 (Levilactobacillus brevis (strain ATCC 367 / BCRC 12310 / CIP 105137 / JCM 1170 / LMG 11437 / NCIMB 947 / NCTC 947) (Lactobacillus brevis)).